Consider the following 307-residue polypeptide: Serine/threonine-protein phosphatase 4 catalytic subunit (307 aa).

Alanine 2 is subject to N-acetylalanine. Mn(2+)-binding residues include aspartate 54, histidine 56, aspartate 82, and asparagine 114. Histidine 115 acts as the Proton donor in catalysis. Mn(2+) contacts are provided by histidine 164 and histidine 238. At leucine 307 the chain carries Leucine methyl ester.

Belongs to the PPP phosphatase family. PP-4 (PP-X) subfamily. In terms of assembly, serine/threonine-protein phosphatase 4 (PP4) occurs in different assemblies of the catalytic and one or more regulatory subunits. Component of the PP4 complexes PPP4C-PPP4R1, PPP4C-PPP4R2, PPP4C-PPP4R2-PPP4R3A, PPP4C-PPP4R2-PPP4R3B and PPP4C-PPP4R4. The PPP4C-PPP4R2 complex appears to be a tetramer composed of 2 molecules of PPP4C and 2 molecules of PPP4R2. Interacts with REL, NFKB1/p50 and RELA. Interacts with SMN1 and GEMIN4. Interacts with IRS4 (phosphorylated). Interacts with SMEK1/PPP4R3A; the interaction requires PP4R2. Interacts with HDAC3. The cofactor is Mn(2+). Methylation at the C-terminal Leu-307 is critical for interactions with regulatory subunits and functions in DNA repair.

It is found in the cytoplasm. Its subcellular location is the nucleus. The protein resides in the cytoskeleton. It localises to the microtubule organizing center. The protein localises to the centrosome. The enzyme catalyses O-phospho-L-seryl-[protein] + H2O = L-seryl-[protein] + phosphate. It carries out the reaction O-phospho-L-threonyl-[protein] + H2O = L-threonyl-[protein] + phosphate. Functionally, protein phosphatase that is involved in many processes such as microtubule organization at centrosomes, maturation of spliceosomal snRNPs, apoptosis, DNA repair, tumor necrosis factor (TNF)-alpha signaling, activation of c-Jun N-terminal kinase MAPK8, regulation of histone acetylation, DNA damage checkpoint signaling, NF-kappa-B activation and cell migration. The PPP4C-PPP4R1 PP4 complex may play a role in dephosphorylation and regulation of HDAC3. The PPP4C-PPP4R2-PPP4R3A PP4 complex specifically dephosphorylates H2AX phosphorylated on Ser-140 (gamma-H2AX) generated during DNA replication and required for DNA DSB repair. Dephosphorylates NDEL1 at CDK1 phosphorylation sites and negatively regulates CDK1 activity in interphase. In response to DNA damage, catalyzes RPA2 dephosphorylation, an essential step for DNA repair since it allows the efficient RPA2-mediated recruitment of RAD51 to chromatin. In Rattus norvegicus (Rat), this protein is Serine/threonine-protein phosphatase 4 catalytic subunit (Ppp4c).